Reading from the N-terminus, the 453-residue chain is UDP-N-acetylmuramoylalanine--D-glutamate ligase (453 aa).

117–123 (GSNGKST) contributes to the ATP binding site.

The protein belongs to the MurCDEF family.

It is found in the cytoplasm. The catalysed reaction is UDP-N-acetyl-alpha-D-muramoyl-L-alanine + D-glutamate + ATP = UDP-N-acetyl-alpha-D-muramoyl-L-alanyl-D-glutamate + ADP + phosphate + H(+). Its pathway is cell wall biogenesis; peptidoglycan biosynthesis. Its function is as follows. Cell wall formation. Catalyzes the addition of glutamate to the nucleotide precursor UDP-N-acetylmuramoyl-L-alanine (UMA). This is UDP-N-acetylmuramoylalanine--D-glutamate ligase from Chromobacterium violaceum (strain ATCC 12472 / DSM 30191 / JCM 1249 / CCUG 213 / NBRC 12614 / NCIMB 9131 / NCTC 9757 / MK).